Consider the following 287-residue polypeptide: Bifunctional protein FolD (287 aa).

Residues 160–162 (GRS), Ser189, and Thr230 each bind NADP(+).

This sequence belongs to the tetrahydrofolate dehydrogenase/cyclohydrolase family. In terms of assembly, homodimer.

The enzyme catalyses (6R)-5,10-methylene-5,6,7,8-tetrahydrofolate + NADP(+) = (6R)-5,10-methenyltetrahydrofolate + NADPH. It carries out the reaction (6R)-5,10-methenyltetrahydrofolate + H2O = (6R)-10-formyltetrahydrofolate + H(+). It participates in one-carbon metabolism; tetrahydrofolate interconversion. Its function is as follows. Catalyzes the oxidation of 5,10-methylenetetrahydrofolate to 5,10-methenyltetrahydrofolate and then the hydrolysis of 5,10-methenyltetrahydrofolate to 10-formyltetrahydrofolate. The protein is Bifunctional protein FolD of Chlamydia muridarum (strain MoPn / Nigg).